The primary structure comprises 411 residues: Secretion apparatus protein BsaZ (411 aa).

Helical transmembrane passes span 28-48 (IVALIVIATGALAAPALVDLT), 80-100 (IAAPFVLLCAAAGALPSLVQS), 137-157 (ALLYVGVFALTVRVFAGLYHA), and 175-195 (IVLTVRLVLLFLLCALPVLIL). Positions 341-411 (AANRGGPPPE…APARTGDQNA (71 aa)) are disordered. A compositionally biased stretch (low complexity) spans 370-404 (DACADNAFPDDAPPGAAAPNAGSPDGPAPDGGAPA).

The protein belongs to the type III secretion exporter family.

The protein resides in the cell membrane. Its function is as follows. Part of the bsa type III secretion system, is involved in the intracellular replication of invading bacteria inside the host cell. Probably necessary for the lysis of the vacuole membrane and escape into the host cell cytoplasm. This is Secretion apparatus protein BsaZ (bsaZ) from Burkholderia pseudomallei (strain 1026b).